The following is a 314-amino-acid chain: Dual specificity protein phosphatase 2 (314 aa).

The 122-residue stretch at glutamate 23–serine 144 folds into the Rhodanese domain. Residues glycine 172–cysteine 313 form the Tyrosine-protein phosphatase domain. Catalysis depends on cysteine 257, which acts as the Phosphocysteine intermediate.

Belongs to the protein-tyrosine phosphatase family. Non-receptor class dual specificity subfamily. Interacts with MAPK14; this interaction does not lead to catalytic activation of DUSP2 and dephosphrylation of MAPK14. Expressed in hematopoietic tissues.

It is found in the nucleus. The catalysed reaction is O-phospho-L-tyrosyl-[protein] + H2O = L-tyrosyl-[protein] + phosphate. It carries out the reaction O-phospho-L-threonyl-[protein] + H2O = L-threonyl-[protein] + phosphate. Dephosphorylates both phosphorylated Thr and Tyr residues in MAPK1, and dephosphorylation of phosphotyrosine is slightly faster than that of phosphothreonine. Can dephosphorylate MAPK1. The protein is Dual specificity protein phosphatase 2 of Homo sapiens (Human).